The following is a 485-amino-acid chain: Glycogen synthase (485 aa).

Lys-21 is a binding site for ADP-alpha-D-glucose.

It belongs to the glycosyltransferase 1 family. Bacterial/plant glycogen synthase subfamily.

It catalyses the reaction [(1-&gt;4)-alpha-D-glucosyl](n) + ADP-alpha-D-glucose = [(1-&gt;4)-alpha-D-glucosyl](n+1) + ADP + H(+). It functions in the pathway glycan biosynthesis; glycogen biosynthesis. In terms of biological role, synthesizes alpha-1,4-glucan chains using ADP-glucose. This is Glycogen synthase from Pseudomonas syringae pv. syringae (strain B728a).